The following is a 157-amino-acid chain: Methylglyoxal synthase (157 aa).

In terms of domain architecture, MGS-like spans M1 to L157. Substrate is bound by residues H12, K16, T38–T41, and S71–G72. D77 (proton donor/acceptor) is an active-site residue. Substrate is bound at residue H104.

Belongs to the methylglyoxal synthase family.

It catalyses the reaction dihydroxyacetone phosphate = methylglyoxal + phosphate. In terms of biological role, catalyzes the formation of methylglyoxal from dihydroxyacetone phosphate. The sequence is that of Methylglyoxal synthase from Maridesulfovibrio salexigens (strain ATCC 14822 / DSM 2638 / NCIMB 8403 / VKM B-1763) (Desulfovibrio salexigens).